We begin with the raw amino-acid sequence, 317 residues long: Transaldolase (317 aa).

Catalysis depends on K132, which acts as the Schiff-base intermediate with substrate.

This sequence belongs to the transaldolase family. Type 1 subfamily. As to quaternary structure, homodimer.

It localises to the cytoplasm. The catalysed reaction is D-sedoheptulose 7-phosphate + D-glyceraldehyde 3-phosphate = D-erythrose 4-phosphate + beta-D-fructose 6-phosphate. It participates in carbohydrate degradation; pentose phosphate pathway; D-glyceraldehyde 3-phosphate and beta-D-fructose 6-phosphate from D-ribose 5-phosphate and D-xylulose 5-phosphate (non-oxidative stage): step 2/3. In terms of biological role, transaldolase is important for the balance of metabolites in the pentose-phosphate pathway. This chain is Transaldolase, found in Shewanella frigidimarina (strain NCIMB 400).